The sequence spans 305 residues: Mitochondrial uncoupling protein 3 (305 aa).

Solcar repeat units lie at residues 14 to 100 (TRIL…LKGL), 112 to 204 (LPLA…AKHF), and 213 to 299 (DNIF…FRLL). 6 consecutive transmembrane segments (helical) span residues 16-36 (ILLASLSAMVAESVTFPIDLT), 69-89 (VIGLYKGLSPAIIRHLFYTPI), 118-138 (ALVGGFSGVIAQVVASPADLV), 178-198 (KGVLPNIQRAFLVNMGELACY), 219-239 (TLASIMSGLASTSLSCPADVV), and 272-292 (WKGFFPTWARLGPWQFVFWVS).

The protein belongs to the mitochondrial carrier (TC 2.A.29) family.

The protein localises to the mitochondrion inner membrane. Its function is as follows. PUMPS are mitochondrial transporter proteins that create proton leaks across the inner mitochondrial membrane, thus uncoupling oxidative phosphorylation. This leads to a decrease in the efficiency of oxidative phosphorylation and an increase in heat production. May be involved in protecting plant cells against oxidative stress damage. This Arabidopsis thaliana (Mouse-ear cress) protein is Mitochondrial uncoupling protein 3 (PUMP3).